Here is an 840-residue protein sequence, read N- to C-terminus: Leucine--tRNA ligase (840 aa).

The 'HIGH' region motif lies at 44–55 (PYPSANGLHVGH). A 'KMSKS' region motif is present at residues 617–621 (KMSKS). Lys620 lines the ATP pocket.

The protein belongs to the class-I aminoacyl-tRNA synthetase family.

It is found in the cytoplasm. It catalyses the reaction tRNA(Leu) + L-leucine + ATP = L-leucyl-tRNA(Leu) + AMP + diphosphate. This Borreliella burgdorferi (strain ATCC 35210 / DSM 4680 / CIP 102532 / B31) (Borrelia burgdorferi) protein is Leucine--tRNA ligase.